Reading from the N-terminus, the 698-residue chain is Polyribonucleotide nucleotidyltransferase (698 aa).

Mg(2+) contacts are provided by Asp-485 and Asp-491. One can recognise a KH domain in the interval 552 to 611 (PRIHTIKINTDKIRDVIGKGGAVIRSLCEETGTTIEIEDDGTVKIAATSGEQADDAINRI). The 69-residue stretch at 621 to 689 (GTIYTGKVVR…RQGRVRLSIK (69 aa)) folds into the S1 motif domain.

It belongs to the polyribonucleotide nucleotidyltransferase family. Component of the RNA degradosome, which is a multiprotein complex involved in RNA processing and mRNA degradation. Requires Mg(2+) as cofactor.

Its subcellular location is the cytoplasm. It carries out the reaction RNA(n+1) + phosphate = RNA(n) + a ribonucleoside 5'-diphosphate. Its function is as follows. Involved in mRNA degradation. Catalyzes the phosphorolysis of single-stranded polyribonucleotides processively in the 3'- to 5'-direction. This Psychromonas ingrahamii (strain DSM 17664 / CCUG 51855 / 37) protein is Polyribonucleotide nucleotidyltransferase.